Reading from the N-terminus, the 121-residue chain is Large ribosomal subunit protein bL12 (121 aa).

This sequence belongs to the bacterial ribosomal protein bL12 family. Homodimer. Part of the ribosomal stalk of the 50S ribosomal subunit. Forms a multimeric L10(L12)X complex, where L10 forms an elongated spine to which 2 to 4 L12 dimers bind in a sequential fashion. Binds GTP-bound translation factors.

In terms of biological role, forms part of the ribosomal stalk which helps the ribosome interact with GTP-bound translation factors. Is thus essential for accurate translation. The chain is Large ribosomal subunit protein bL12 from Psychromonas ingrahamii (strain DSM 17664 / CCUG 51855 / 37).